The chain runs to 113 residues: Iron-sulfur cluster insertion protein ErpA (113 aa).

3 residues coordinate iron-sulfur cluster: cysteine 41, cysteine 105, and cysteine 107.

It belongs to the HesB/IscA family. As to quaternary structure, homodimer. Iron-sulfur cluster is required as a cofactor.

In terms of biological role, required for insertion of 4Fe-4S clusters for at least IspG. The chain is Iron-sulfur cluster insertion protein ErpA from Histophilus somni (strain 129Pt) (Haemophilus somnus).